Consider the following 295-residue polypeptide: Ankyrin repeat and SOCS box protein 17 (295 aa).

An ANK repeat occupies 146–176 (SGITPLLYVAQTRQSNILKILLQYGILEREN). In terms of domain architecture, SOCS box spans 232-295 (LGRRPIISNW…CLQNYLNLES (64 aa)).

It belongs to the ankyrin SOCS box (ASB) family.

The protein operates within protein modification; protein ubiquitination. Its function is as follows. May be a substrate-recognition component of a SCF-like ECS (Elongin-Cullin-SOCS-box protein) E3 ubiquitin-protein ligase complex which mediates the ubiquitination and subsequent proteasomal degradation of target proteins. This is Ankyrin repeat and SOCS box protein 17 (ASB17) from Bos taurus (Bovine).